The chain runs to 272 residues: Pyrroline-5-carboxylate reductase 3 (272 aa).

Belongs to the pyrroline-5-carboxylate reductase family.

It is found in the cytoplasm. It catalyses the reaction L-proline + NADP(+) = (S)-1-pyrroline-5-carboxylate + NADPH + 2 H(+). It carries out the reaction L-proline + NAD(+) = (S)-1-pyrroline-5-carboxylate + NADH + 2 H(+). It functions in the pathway amino-acid biosynthesis; L-proline biosynthesis; L-proline from L-glutamate 5-semialdehyde: step 1/1. In terms of biological role, catalyzes the reduction of 1-pyrroline-5-carboxylate (PCA) to L-proline. This chain is Pyrroline-5-carboxylate reductase 3 (proG), found in Bacillus subtilis (strain 168).